A 133-amino-acid polypeptide reads, in one-letter code: Gamma-crystallin 1 (133 aa).

Positions 1–41 (WMLYEHPNYTGHQYFLRRGEYPDFQQWMGLNDSIRSCRVIP) constitute a Beta/gamma crystallin 'Greek key' 2 domain. Residues 42-46 (QHRGS) are connecting peptide. 2 Beta/gamma crystallin 'Greek key' domains span residues 47-87 (FRLR…NVLE) and 88-130 (GHWI…RRVQ).

This sequence belongs to the beta/gamma-crystallin family. In terms of assembly, monomer.

Functionally, crystallins are the dominant structural components of the vertebrate eye lens. In Rana temporaria (European common frog), this protein is Gamma-crystallin 1.